A 338-amino-acid polypeptide reads, in one-letter code: Photosystem II assembly lipoprotein Ycf48 (338 aa).

Positions 1–23 are cleaved as a signal peptide; the sequence is MKKIITSFPNLLLSILLCFVLSS. Residue C24 is the site of N-palmitoyl cysteine attachment. Residue C24 is the site of S-diacylglycerol cysteine attachment.

It belongs to the Ycf48 family. As to quaternary structure, part of early PSII assembly complexes which includes D1 (psbA) and PsbI; not found in mature PSII. Binds to the lumenal side of PSII complexes. Interacts with YidC.

The protein resides in the cellular thylakoid membrane. A factor required for optimal assembly of photosystem II (PSII), acting in the early stages of PSII assembly. Also plays a role in replacement of photodamaged D1 (psbA). Assists YidC in synthesis of chlorophyll-binding proteins. The sequence is that of Photosystem II assembly lipoprotein Ycf48 from Prochlorococcus marinus (strain MIT 9312).